A 269-amino-acid polypeptide reads, in one-letter code: tRNA pseudouridine synthase A (269 aa).

The active-site Nucleophile is the D51. Residue Y109 participates in substrate binding.

The protein belongs to the tRNA pseudouridine synthase TruA family. Homodimer.

The catalysed reaction is uridine(38/39/40) in tRNA = pseudouridine(38/39/40) in tRNA. Functionally, formation of pseudouridine at positions 38, 39 and 40 in the anticodon stem and loop of transfer RNAs. This chain is tRNA pseudouridine synthase A, found in Aeromonas hydrophila subsp. hydrophila (strain ATCC 7966 / DSM 30187 / BCRC 13018 / CCUG 14551 / JCM 1027 / KCTC 2358 / NCIMB 9240 / NCTC 8049).